Here is a 49-residue protein sequence, read N- to C-terminus: Heme exporter protein C (49 aa).

Belongs to the CcmC/CycZ/HelC family.

It is found in the cell inner membrane. Its function is as follows. Required for the export of heme to the periplasm for the biogenesis of c-type cytochromes. The sequence is that of Heme exporter protein C from Rhizobium leguminosarum bv. viciae.